The following is a 273-amino-acid chain: Phosphate import ATP-binding protein PstB (273 aa).

An ABC transporter domain is found at 19–258 (ISIQNVTISY…FNETEKIFNS (240 aa)). Position 51-58 (51-58 (GPSGCGKS)) interacts with ATP.

This sequence belongs to the ABC transporter superfamily. Phosphate importer (TC 3.A.1.7) family. As to quaternary structure, the complex is composed of two ATP-binding proteins (PstB), two transmembrane proteins (PstC and PstA) and a solute-binding protein (PstS).

Its subcellular location is the cell inner membrane. The catalysed reaction is phosphate(out) + ATP + H2O = ADP + 2 phosphate(in) + H(+). Its function is as follows. Part of the ABC transporter complex PstSACB involved in phosphate import. Responsible for energy coupling to the transport system. The chain is Phosphate import ATP-binding protein PstB from Parasynechococcus marenigrum (strain WH8102).